A 499-amino-acid polypeptide reads, in one-letter code: Guanosine-5'-triphosphate,3'-diphosphate pyrophosphatase (499 aa).

The protein belongs to the GppA/Ppx family. GppA subfamily.

It carries out the reaction guanosine 3'-diphosphate 5'-triphosphate + H2O = guanosine 3',5'-bis(diphosphate) + phosphate + H(+). It functions in the pathway purine metabolism; ppGpp biosynthesis; ppGpp from GTP: step 2/2. Its function is as follows. Catalyzes the conversion of pppGpp to ppGpp. Guanosine pentaphosphate (pppGpp) is a cytoplasmic signaling molecule which together with ppGpp controls the 'stringent response', an adaptive process that allows bacteria to respond to amino acid starvation, resulting in the coordinated regulation of numerous cellular activities. This Klebsiella pneumoniae subsp. pneumoniae (strain ATCC 700721 / MGH 78578) protein is Guanosine-5'-triphosphate,3'-diphosphate pyrophosphatase.